A 344-amino-acid chain; its full sequence is Sulfate/thiosulfate import ATP-binding protein CysA (344 aa).

The 235-residue stretch at 3–237 (IEVRNLVKKF…PATAFVHGFI (235 aa)) folds into the ABC transporter domain. 35-42 (GPSGSGKT) is an ATP binding site.

Belongs to the ABC transporter superfamily. Sulfate/tungstate importer (TC 3.A.1.6) family. As to quaternary structure, the complex is composed of two ATP-binding proteins (CysA), two transmembrane proteins (CysT and CysW) and a solute-binding protein (CysP).

Its subcellular location is the cell inner membrane. It catalyses the reaction sulfate(out) + ATP + H2O = sulfate(in) + ADP + phosphate + H(+). The enzyme catalyses thiosulfate(out) + ATP + H2O = thiosulfate(in) + ADP + phosphate + H(+). Functionally, part of the ABC transporter complex CysAWTP involved in sulfate/thiosulfate import. Responsible for energy coupling to the transport system. The sequence is that of Sulfate/thiosulfate import ATP-binding protein CysA from Bradyrhizobium diazoefficiens (strain JCM 10833 / BCRC 13528 / IAM 13628 / NBRC 14792 / USDA 110).